We begin with the raw amino-acid sequence, 435 residues long: GTPase Der (435 aa).

2 consecutive EngA-type G domains span residues 2 to 167 (ATVV…RESG) and 178 to 351 (PKIA…ESYC). Residues 8-15 (GRANVGKS), 55-59 (DTCGV), 118-121 (NKSE), 184-191 (GKPNVGKS), 231-235 (DTAGM), and 297-300 (NKFD) each bind GTP. The region spanning 352 to 435 (RKVPQQLLSK…PLVIEFKSRR (84 aa)) is the KH-like domain.

The protein belongs to the TRAFAC class TrmE-Era-EngA-EngB-Septin-like GTPase superfamily. EngA (Der) GTPase family. In terms of assembly, associates with the 50S ribosomal subunit.

GTPase that plays an essential role in the late steps of ribosome biogenesis. The sequence is that of GTPase Der from Pseudothermotoga lettingae (strain ATCC BAA-301 / DSM 14385 / NBRC 107922 / TMO) (Thermotoga lettingae).